The chain runs to 433 residues: Inorganic triphosphatase (433 aa).

The CYTH domain maps to 2 to 202; sequence AQEIELKFIV…ARGYHLAQGN (201 aa). Positions 218–433 constitute a CHAD domain; sequence KADVEQGLEA…EPFWLHSGKR (216 aa).

It catalyses the reaction triphosphate + H2O = phosphate + diphosphate. Its activity is regulated as follows. Inhibited by calcium ion and activated by magnesium ion. Its function is as follows. Involved in the hydrolysis of the beta-gamma-phosphoanhydride linkage of triphosphate-containing substrates (inorganic or nucleoside-linked). Catalyzes the hydrolysis of inorganic triphosphate (PPPi), which could be cytotoxic because of its high affinity for calcium ion, thereby interfering with calcium signaling. It also hydrolyzes slowly thiamine triphosphate (ThTP). YgiF is a specific PPPase, but it contributes only marginally to the total PPPase activity in E.coli, where the main enzyme responsible for hydrolysis of PPPi is inorganic pyrophosphatase (PPase). In Escherichia coli (strain K12), this protein is Inorganic triphosphatase (ygiF).